A 60-amino-acid polypeptide reads, in one-letter code: Large ribosomal subunit protein bL32 (60 aa).

The protein belongs to the bacterial ribosomal protein bL32 family.

The protein is Large ribosomal subunit protein bL32 of Desulfovibrio desulfuricans (strain ATCC 27774 / DSM 6949 / MB).